We begin with the raw amino-acid sequence, 211 residues long: Protein-L-isoaspartate O-methyltransferase (211 aa).

Residue S62 is part of the active site.

Belongs to the methyltransferase superfamily. L-isoaspartyl/D-aspartyl protein methyltransferase family.

The protein resides in the cytoplasm. The catalysed reaction is [protein]-L-isoaspartate + S-adenosyl-L-methionine = [protein]-L-isoaspartate alpha-methyl ester + S-adenosyl-L-homocysteine. Its function is as follows. Catalyzes the methyl esterification of L-isoaspartyl residues in peptides and proteins that result from spontaneous decomposition of normal L-aspartyl and L-asparaginyl residues. It plays a role in the repair and/or degradation of damaged proteins. This chain is Protein-L-isoaspartate O-methyltransferase, found in Shewanella frigidimarina (strain NCIMB 400).